The primary structure comprises 492 residues: Ribose import ATP-binding protein RbsA (492 aa).

ABC transporter domains are found at residues 3–239 and 249–492; these read IEMK…VGRS and AEIR…TGGQ. 35 to 42 contacts ATP; it reads GENGAGKS.

This sequence belongs to the ABC transporter superfamily. Ribose importer (TC 3.A.1.2.1) family. As to quaternary structure, the complex is composed of an ATP-binding protein (RbsA), two transmembrane proteins (RbsC) and a solute-binding protein (RbsB).

The protein localises to the cell membrane. It catalyses the reaction D-ribose(out) + ATP + H2O = D-ribose(in) + ADP + phosphate + H(+). Functionally, part of the ABC transporter complex RbsABC involved in ribose import. Responsible for energy coupling to the transport system. In Lactococcus lactis subsp. lactis (strain IL1403) (Streptococcus lactis), this protein is Ribose import ATP-binding protein RbsA.